The following is a 127-amino-acid chain: Small ribosomal subunit protein uS11 (127 aa).

It belongs to the universal ribosomal protein uS11 family. In terms of assembly, part of the 30S ribosomal subunit. Interacts with proteins S7 and S18. Binds to IF-3.

Its function is as follows. Located on the platform of the 30S subunit, it bridges several disparate RNA helices of the 16S rRNA. Forms part of the Shine-Dalgarno cleft in the 70S ribosome. This Lactococcus lactis subsp. lactis (strain IL1403) (Streptococcus lactis) protein is Small ribosomal subunit protein uS11.